The chain runs to 246 residues: E3 ubiquitin-protein ligase MARCHF2 (246 aa).

The segment at 56-116 (DSQSDCPFCR…ELCHTEFAVE (61 aa)) adopts an RING-CH-type zinc-finger fold. 8 residues coordinate Zn(2+): Cys64, Cys67, Cys80, Cys82, His90, Cys93, Cys106, and Cys109. Residues 121-246 (PLTEWLKDPG…LKKVAEETPV (126 aa)) are required for interaction with IKBKG. The next 2 helical transmembrane spans lie at 138 to 158 (LCCDMVCFVFITPLAAISGWL) and 175 to 195 (AVGLIALTIALFTIYVLWTLV).

Interacts with STX6; the interaction promotes MARCHF2-mediated ubiquitination and degradation of CFTR. Interacts with MARCHF3. Interacts with GOPC/CAL; the interaction leads to CFTR ubiquitination and degradation. Interacts with CFTR; the interaction leads to CFTR ubiqtuitination and degradation. Interacts (via PDZ domain) with DLG1 (via PDZ domains); the interaction leads to DLG1 ubiqtuitination and degradation. Interacts with ERGIC3. Interacts with ADRB2. Interacts with IKBKG/NEMO; during the late stages of macrophage viral and bacterial infection; the interaction leads to ubiquitination and degradation of IKBKG/NEMO.

The protein localises to the endoplasmic reticulum membrane. It is found in the lysosome membrane. The protein resides in the endosome membrane. Its subcellular location is the golgi apparatus membrane. It localises to the cytoplasm. The protein localises to the cell membrane. The enzyme catalyses S-ubiquitinyl-[E2 ubiquitin-conjugating enzyme]-L-cysteine + [acceptor protein]-L-lysine = [E2 ubiquitin-conjugating enzyme]-L-cysteine + N(6)-ubiquitinyl-[acceptor protein]-L-lysine.. The protein operates within protein modification; protein ubiquitination. E3 ubiquitin-protein ligase that may mediate ubiquitination of TFRC and CD86, and promote their subsequent endocytosis and sorting to lysosomes via multivesicular bodies. E3 ubiquitin ligases accept ubiquitin from an E2 ubiquitin-conjugating enzyme in the form of a thioester and then directly transfer the ubiquitin to targeted substrates. Together with GOPC/CAL mediates the ubiquitination and lysosomal degradation of CFTR. Ubiquitinates and therefore mediates the degradation of DLG1. Regulates the intracellular trafficking and secretion of alpha1-antitrypsin/SERPINA1 and HP/haptoglobin via ubiquitination and degradation of the cargo receptor ERGIC3. Negatively regulates the antiviral and antibacterial immune response by repression of the NF-kB and type 1 IFN signaling pathways, via MARCHF2-mediated K48-linked polyubiquitination of IKBKG/NEMO, resulting in its proteasomal degradation. May be involved in endosomal trafficking through interaction with STX6. The chain is E3 ubiquitin-protein ligase MARCHF2 (Marchf2) from Mus musculus (Mouse).